We begin with the raw amino-acid sequence, 459 residues long: Glutamate--tRNA ligase 2 (459 aa).

Positions 8-18 match the 'HIGH' region motif; sequence PSPTGYIHIGN. The 'KMSKS' region signature appears at 249-253; the sequence is GLSKR. Lys252 is a binding site for ATP.

This sequence belongs to the class-I aminoacyl-tRNA synthetase family. Glutamate--tRNA ligase type 1 subfamily. Monomer.

The protein resides in the cytoplasm. The enzyme catalyses tRNA(Glu) + L-glutamate + ATP = L-glutamyl-tRNA(Glu) + AMP + diphosphate. Its function is as follows. Catalyzes the attachment of glutamate to tRNA(Glu) in a two-step reaction: glutamate is first activated by ATP to form Glu-AMP and then transferred to the acceptor end of tRNA(Glu). The polypeptide is Glutamate--tRNA ligase 2 (Bartonella henselae (strain ATCC 49882 / DSM 28221 / CCUG 30454 / Houston 1) (Rochalimaea henselae)).